Reading from the N-terminus, the 204-residue chain is N-(5'-phosphoribosyl)anthranilate isomerase (204 aa).

It belongs to the TrpF family.

The catalysed reaction is N-(5-phospho-beta-D-ribosyl)anthranilate = 1-(2-carboxyphenylamino)-1-deoxy-D-ribulose 5-phosphate. The protein operates within amino-acid biosynthesis; L-tryptophan biosynthesis; L-tryptophan from chorismate: step 3/5. In Bacillus mycoides (strain KBAB4) (Bacillus weihenstephanensis), this protein is N-(5'-phosphoribosyl)anthranilate isomerase.